The following is a 505-amino-acid chain: Xylose import ATP-binding protein XylG (505 aa).

ABC transporter domains lie at 6-243 and 262-505; these read LEMR…VGRE and VKNY…TGGK. 38 to 45 provides a ligand contact to ATP; sequence GENGAGKS.

This sequence belongs to the ABC transporter superfamily. Xylose importer (TC 3.A.1.2.4) family. As to quaternary structure, the complex is composed of two ATP-binding proteins (XylG), two transmembrane proteins (XylH) and a solute-binding protein (XylF).

It is found in the cell membrane. It catalyses the reaction D-xylose(out) + ATP + H2O = D-xylose(in) + ADP + phosphate + H(+). Functionally, part of the ABC transporter complex XylFGH involved in xylose import. Responsible for energy coupling to the transport system. This Thermoanaerobacter pseudethanolicus (strain ATCC 33223 / 39E) (Clostridium thermohydrosulfuricum) protein is Xylose import ATP-binding protein XylG.